The sequence spans 896 residues: Translation initiation factor IF-2 (896 aa).

Over residues 117-174 the composition is skewed to basic and acidic residues; sequence AEAEAKAKAEAEAKAKVDAEAKVKAKAEAEAKAKAKVQTEKPAAETAEDKAAKAEEAK. The interval 117–303 is disordered; it reads AEAEAKAKAE…TRSVAPESMD (187 aa). A compositionally biased stretch (low complexity) spans 175 to 195; that stretch reads LLAAQDAVAKAKANEEASAAA. Positions 196 to 227 are enriched in basic and acidic residues; it reads DEARRLAEENEKRWAEEEKARKEAEKSVDHHV. Positions 254 to 268 are enriched in low complexity; it reads PSANAGNNANANAGA. The tr-type G domain maps to 396-563; that stretch reads PRAPVVTIMG…GILLEAEVLE (168 aa). A G1 region spans residues 405–412; sequence GHVDHGKT. 405 to 412 contacts GTP; that stretch reads GHVDHGKT. Residues 430-434 are G2; sequence GITQH. The interval 451-454 is G3; it reads DTPG. Residues 451–455 and 505–508 each bind GTP; these read DTPGH and NKID. Positions 505–508 are G4; sequence NKID. The segment at 541–543 is G5; the sequence is SAK.

The protein belongs to the TRAFAC class translation factor GTPase superfamily. Classic translation factor GTPase family. IF-2 subfamily.

Its subcellular location is the cytoplasm. Its function is as follows. One of the essential components for the initiation of protein synthesis. Protects formylmethionyl-tRNA from spontaneous hydrolysis and promotes its binding to the 30S ribosomal subunits. Also involved in the hydrolysis of GTP during the formation of the 70S ribosomal complex. The chain is Translation initiation factor IF-2 from Shewanella pealeana (strain ATCC 700345 / ANG-SQ1).